Consider the following 412-residue polypeptide: Argininosuccinate synthase (412 aa).

Residue 10 to 18 (AYSGGLDTS) coordinates ATP. Tyrosine 89 serves as a coordination point for L-citrulline. Glycine 119 serves as a coordination point for ATP. Threonine 121, asparagine 125, and aspartate 126 together coordinate L-aspartate. Asparagine 125 is an L-citrulline binding site. L-citrulline is bound by residues arginine 129, serine 177, glutamate 261, and tyrosine 273.

The protein belongs to the argininosuccinate synthase family. Type 1 subfamily. As to quaternary structure, homotetramer.

Its subcellular location is the cytoplasm. The enzyme catalyses L-citrulline + L-aspartate + ATP = 2-(N(omega)-L-arginino)succinate + AMP + diphosphate + H(+). It functions in the pathway amino-acid biosynthesis; L-arginine biosynthesis; L-arginine from L-ornithine and carbamoyl phosphate: step 2/3. This Bifidobacterium longum (strain NCC 2705) protein is Argininosuccinate synthase.